Here is a 156-residue protein sequence, read N- to C-terminus: Small ribosomal subunit protein uS7c (156 aa).

It belongs to the universal ribosomal protein uS7 family. In terms of assembly, part of the 30S ribosomal subunit.

It localises to the plastid. It is found in the chloroplast. Its function is as follows. One of the primary rRNA binding proteins, it binds directly to 16S rRNA where it nucleates assembly of the head domain of the 30S subunit. The polypeptide is Small ribosomal subunit protein uS7c (rps7) (Mesostigma viride (Green alga)).